We begin with the raw amino-acid sequence, 424 residues long: Piriformospora indica-insensitive protein 2 (424 aa).

A signal peptide spans 1-21; sequence MLWQTFFSSLLLLSLLFGCNG. LRR repeat units follow at residues 141-166, 167-190, 191-213, 214-237, 238-263, 265-286, 287-311, 312-336, 337-360, and 362-387; these read ASNLESLEFRSNPGLIGELPETIGNL, TKLKSLVVLENGFSGELPASICNL, KRLKRLVFAGNSFAGMIPNCFKG, LKELLILDLSRNSFSGTLPTSFGD, LVSLLKLDLSNNLLEGNLPQELGFLK, LTLLDLRNNRFSGGLSKNIENI, QSLTELVLSNNPMGEEDMVGTNWGK, MSNLVVLDLSKMGLRGEIPTSLTNL, KRLRFLGLNNNNLTGFVPSKKLEA, and PCLGALYINGNNLTGELRFSTKFYEK.

The protein resides in the cell membrane. In terms of biological role, required for growth promotion and enhanced seed production mediated by the endophytic fungus Piriformospora indica. The protein is Piriformospora indica-insensitive protein 2 (PII-2) of Arabidopsis thaliana (Mouse-ear cress).